A 222-amino-acid polypeptide reads, in one-letter code: Ras-related protein Rab-41 (222 aa).

Serine 41, valine 42, glycine 43, lysine 44, threonine 45, serine 46, and threonine 63 together coordinate GTP. Threonine 45 contacts Mg(2+). Residues 58–66 (CACQATVGI) form a switch-I region. Residues threonine 63 and aspartate 86 each coordinate Mg(2+). Residues glycine 89, asparagine 144, lysine 145, aspartate 147, serine 174, alanine 175, and lysine 176 each contribute to the GTP site. The interval 89-105 (GQERFHSLIPSYIRDST) is switch-II. A lipid anchor (S-geranylgeranyl cysteine) is attached at cysteine 222.

This sequence belongs to the small GTPase superfamily. Rab family. Mg(2+) is required as a cofactor. As to expression, widely expressed in brain, testis, lung, heart, ovary, colon, kidney, uterus and spleen but not in liver.

Its subcellular location is the cytoplasm. It carries out the reaction GTP + H2O = GDP + phosphate + H(+). With respect to regulation, regulated by guanine nucleotide exchange factors (GEFs) which promote the exchange of bound GDP for free GTP. Regulated by GTPase activating proteins (GAPs) which increase the GTP hydrolysis activity. Inhibited by GDP dissociation inhibitors (GDIs). In terms of biological role, the small GTPases Rab are key regulators of intracellular membrane trafficking, from the formation of transport vesicles to their fusion with membranes. Rabs cycle between an inactive GDP-bound form and an active GTP-bound form that is able to recruit to membranes different sets of downstream effectors directly responsible for vesicle formation, movement, tethering and fusion. RAB41 is required for normal Golgi ribbon organization and ER-to-Golgi trafficking. This chain is Ras-related protein Rab-41, found in Homo sapiens (Human).